The sequence spans 454 residues: tRNA modification GTPase MnmE (454 aa).

3 residues coordinate (6S)-5-formyl-5,6,7,8-tetrahydrofolate: R23, E80, and K120. The 162-residue stretch at 216-377 folds into the TrmE-type G domain; it reads GMKVVIAGRP…LRDHLKQSMG (162 aa). N226 provides a ligand contact to K(+). Residues 226-231, 245-251, 270-273, 335-338, and 358-360 each bind GTP; these read NAGKSS, TDIAGTT, DTAG, NKAD, and SAR. S230 contacts Mg(2+). Residues T245, I247, and T250 each coordinate K(+). T251 is a Mg(2+) binding site. K454 is a binding site for (6S)-5-formyl-5,6,7,8-tetrahydrofolate.

Belongs to the TRAFAC class TrmE-Era-EngA-EngB-Septin-like GTPase superfamily. TrmE GTPase family. In terms of assembly, homodimer. Heterotetramer of two MnmE and two MnmG subunits. K(+) serves as cofactor.

The protein resides in the cytoplasm. In terms of biological role, exhibits a very high intrinsic GTPase hydrolysis rate. Involved in the addition of a carboxymethylaminomethyl (cmnm) group at the wobble position (U34) of certain tRNAs, forming tRNA-cmnm(5)s(2)U34. The sequence is that of tRNA modification GTPase MnmE from Pectobacterium carotovorum subsp. carotovorum (strain PC1).